Consider the following 233-residue polypeptide: Ras-related protein Rab-20 (233 aa).

Positions 17, 18, 19, 32, and 36 each coordinate GTP. Thr-19 lines the Mg(2+) pocket. 2 short sequence motifs (switch) span residues 28 to 41 (RRFP…GGAF) and 55 to 72 (DTAG…YCRG). Residues Thr-36 and Asp-55 each coordinate Mg(2+). Positions 58, 113, 114, and 116 each coordinate GTP. The segment covering 119–130 (SERDTEGGEKEG) has biased composition (basic and acidic residues). Positions 119-138 (SERDTEGGEKEGPASGKVGS) are disordered. Ala-183 and Lys-184 together coordinate GTP. 2 S-geranylgeranyl cysteine lipidation sites follow: Cys-231 and Cys-232.

This sequence belongs to the small GTPase superfamily. Rab family. The cofactor is Mg(2+). Present in a variety of tissues, but not in brain.

It localises to the cytoplasmic vesicle. The protein resides in the phagosome. It is found in the phagosome membrane. The protein localises to the golgi apparatus. It carries out the reaction GTP + H2O = GDP + phosphate + H(+). With respect to regulation, regulated by guanine nucleotide exchange factors (GEFs) which promote the exchange of bound GDP for free GTP. Regulated by GTPase activating proteins (GAPs) which increase the GTP hydrolysis activity. Inhibited by GDP dissociation inhibitors (GDIs). Functionally, plays a role in apical endocytosis/recycling. Plays a role in the maturation and acidification of phagosomes that engulf pathogens, such as S.aureus and Mycobacterium. Plays a role in the fusion of phagosomes with lysosomes. This chain is Ras-related protein Rab-20, found in Mus musculus (Mouse).